The sequence spans 686 residues: Translation initiation factor IF-2 (686 aa).

A disordered region spans residues 61-98; that stretch reads FEVEEKVVRSKKNSNKKKKKGKGNEDKRQENFAGRQQT. Over residues 69 to 81 the composition is skewed to basic residues; that stretch reads RSKKNSNKKKKKG. A tr-type G domain is found at 188 to 357; it reads ERPAVVTIMG…LLVSEVEEYK (170 aa). Positions 197-204 are G1; sequence GHVDHGKT. 197 to 204 is a binding site for GTP; the sequence is GHVDHGKT. The tract at residues 222–226 is G2; that stretch reads GITQH. The segment at 243-246 is G3; sequence DTPG. Residues 243–247 and 297–300 each bind GTP; these read DTPGH and NKMD. The interval 297–300 is G4; that stretch reads NKMD. Residues 333 to 335 form a G5 region; sequence SAI.

Belongs to the TRAFAC class translation factor GTPase superfamily. Classic translation factor GTPase family. IF-2 subfamily.

The protein resides in the cytoplasm. Functionally, one of the essential components for the initiation of protein synthesis. Protects formylmethionyl-tRNA from spontaneous hydrolysis and promotes its binding to the 30S ribosomal subunits. Also involved in the hydrolysis of GTP during the formation of the 70S ribosomal complex. This chain is Translation initiation factor IF-2, found in Bacillus cereus (strain B4264).